The primary structure comprises 724 residues: Catalase-peroxidase (724 aa).

A cross-link (tryptophyl-tyrosyl-methioninium (Trp-Tyr) (with M-252)) is located at residues 98 to 226; the sequence is WHSAGTYRIA…LAAVMMGLIY (129 aa). His-99 acts as the Proton acceptor in catalysis. Positions 226–252 form a cross-link, tryptophyl-tyrosyl-methioninium (Tyr-Met) (with W-98); sequence YVNPEGVDGNPDPLKTAQDMRVTFARM. His-267 serves as a coordination point for heme b.

It belongs to the peroxidase family. Peroxidase/catalase subfamily. As to quaternary structure, homodimer or homotetramer. Heme b is required as a cofactor. In terms of processing, formation of the three residue Trp-Tyr-Met cross-link is important for the catalase, but not the peroxidase activity of the enzyme.

The enzyme catalyses H2O2 + AH2 = A + 2 H2O. The catalysed reaction is 2 H2O2 = O2 + 2 H2O. Functionally, bifunctional enzyme with both catalase and broad-spectrum peroxidase activity. The sequence is that of Catalase-peroxidase from Vibrio cholerae serotype O1 (strain ATCC 39315 / El Tor Inaba N16961).